The primary structure comprises 107 residues: Nucleoid-associated protein A1C_06705 (107 aa).

The protein belongs to the YbaB/EbfC family. Homodimer.

Its subcellular location is the cytoplasm. The protein localises to the nucleoid. Functionally, binds to DNA and alters its conformation. May be involved in regulation of gene expression, nucleoid organization and DNA protection. The chain is Nucleoid-associated protein A1C_06705 from Rickettsia akari (strain Hartford).